The sequence spans 433 residues: Ligand-dependent corepressor (433 aa).

A disordered region spans residues 1 to 51 (MQRMIQQFAAEYTSKNSSTQDPSQPNSTKNQSLPKASPVTTSPTAATTQNP). A compositionally biased stretch (polar residues) spans 13–34 (TSKNSSTQDPSQPNSTKNQSLP). Residues 36–48 (ASPVTTSPTAATT) show a composition bias toward low complexity. Serine 42 is modified (phosphoserine). The Interaction with nuclear receptors signature appears at 53–57 (LSKLL). Serine 63 is modified (phosphoserine). A disordered region spans residues 64 to 147 (PLDLTVRKSQ…GTREGFGHST (84 aa)). Residues 93–110 (AGSTSLSHSPGCSSTQGN) are compositionally biased toward polar residues. Position 249 is a phosphoserine (serine 249). Lysine 254 is covalently cross-linked (Glycyl lysine isopeptide (Lys-Gly) (interchain with G-Cter in SUMO2)). Positions 299–348 (QSRKSMLDAGPDSWGSDAEQSTSGQPYPTSDQEGDPGSKQPRKKRGRYRQ) are disordered. Polar residues predominate over residues 316–329 (AEQSTSGQPYPTSD). The Nuclear localization signal signature appears at 339-345 (PRKKRGR). The region spanning 340–392 (RKKRGRYRQYNSEILEEAISVVMSGKMSVSKAQSIYGIPHSTLEYKVKERLGT) is the HTH psq-type domain. Arginine 345 participates in a covalent cross-link: Glycyl lysine isopeptide (Lys-Gly) (interchain with G-Cter in SUMO2). The H-T-H motif DNA-binding region spans 368–388 (VSKAQSIYGIPHSTLEYKVKE). Glycine 391 is covalently cross-linked (Glycyl lysine isopeptide (Lys-Gly) (interchain with G-Cter in SUMO2)). The interval 393–412 (LKNPPKKKMKLMRSEGPDVS) is disordered. Residue lysine 414 forms a Glycyl lysine isopeptide (Lys-Gly) (interchain with G-Cter in SUMO2) linkage.

In terms of assembly, interacts with ESR1 and ESR2 in the presence of estradiol. Interacts with CTBP1, HDAC3 and HDAC6. Component of a large corepressor complex that contains about 20 proteins, including CTBP1, CTBP2, HDAC1 and HDAC2. As to expression, ubiquitous.

It is found in the nucleus. In terms of biological role, may act as transcription activator that binds DNA elements with the sequence 5'-CCCTATCGATCGATCTCTACCT-3'. Repressor of ligand-dependent transcription activation by target nuclear receptors. Repressor of ligand-dependent transcription activation by ESR1, ESR2, NR3C1, PGR, RARA, RARB, RARG, RXRA and VDR. The protein is Ligand-dependent corepressor of Homo sapiens (Human).